The chain runs to 365 residues: MEVKDIVFMNKGDGENSYVKSAGLTLKVIAKTQPMVQKAVQSLFKGTHSAPLQVVNVADLGCALAPQPLESMSIVIESIVEKCGELGCEMPEIQFHFNDLAGNDFNTLFKGLSVVQEKYKNVSWFAMGAPGSFHGRLFPRNSMHLVHSCYSVHWLSKAPKITSEEGLPLNKGKIYMSKTSXXXXXXXXXXXFEEDFSSVLRFRSPELAPDGRMVLILNGRQSADPTEKDICYLWDLLAEALSYLVSEGLIDEEKLDSFNVPYYNPSQEEVERVIDKEGSFTTEFSDTVVLEIGGKNAWSDPGLRIKGYRCFSEPVLSHQFGEEVMDKLFDKAEEILAEDYKQGKEATKNISIVVVLKKKTNQTWT.

Y18 contributes to the S-adenosyl-L-homocysteine binding site. Theobromine is bound at residue T25. Residues C62, Q67, D99, L100, S132, and F133 each contribute to the S-adenosyl-L-homocysteine site. Theobromine is bound by residues Y150, H153, and W154. The Mg(2+) site is built by N170, D256, F258, and N259. F311 contributes to the theobromine binding site.

It belongs to the methyltransferase superfamily. Type-7 methyltransferase family. Requires Mg(2+) as cofactor.

The catalysed reaction is 7-methylxanthine + S-adenosyl-L-methionine = theobromine + S-adenosyl-L-homocysteine + H(+). Its pathway is alkaloid biosynthesis. Its function is as follows. Involved in the biosynthesis of theobromine. The protein is Probable 7-methylxanthine methyltransferase 4 of Theobroma cacao (Cacao).